The chain runs to 874 residues: Alanine--tRNA ligase (874 aa).

Zn(2+) is bound by residues His564, His568, Cys665, and His669.

Belongs to the class-II aminoacyl-tRNA synthetase family. The cofactor is Zn(2+).

Its subcellular location is the cytoplasm. It catalyses the reaction tRNA(Ala) + L-alanine + ATP = L-alanyl-tRNA(Ala) + AMP + diphosphate. Catalyzes the attachment of alanine to tRNA(Ala) in a two-step reaction: alanine is first activated by ATP to form Ala-AMP and then transferred to the acceptor end of tRNA(Ala). Also edits incorrectly charged Ser-tRNA(Ala) and Gly-tRNA(Ala) via its editing domain. The chain is Alanine--tRNA ligase from Paraburkholderia phymatum (strain DSM 17167 / CIP 108236 / LMG 21445 / STM815) (Burkholderia phymatum).